Reading from the N-terminus, the 156-residue chain is Small ribosomal subunit protein uS7c (156 aa).

It belongs to the universal ribosomal protein uS7 family. As to quaternary structure, part of the 30S ribosomal subunit.

It is found in the plastid. It localises to the chloroplast. Functionally, one of the primary rRNA binding proteins, it binds directly to 16S rRNA where it nucleates assembly of the head domain of the 30S subunit. This Phaeodactylum tricornutum (strain CCAP 1055/1) protein is Small ribosomal subunit protein uS7c (rps7).